We begin with the raw amino-acid sequence, 179 residues long: Peptide deformylase 2 (179 aa).

C101 and H143 together coordinate Fe cation. E144 is an active-site residue. H147 contacts Fe cation.

It belongs to the polypeptide deformylase family. Fe(2+) is required as a cofactor.

It carries out the reaction N-terminal N-formyl-L-methionyl-[peptide] + H2O = N-terminal L-methionyl-[peptide] + formate. Functionally, removes the formyl group from the N-terminal Met of newly synthesized proteins. Requires at least a dipeptide for an efficient rate of reaction. N-terminal L-methionine is a prerequisite for activity but the enzyme has broad specificity at other positions. This Pseudomonas syringae pv. tomato (strain ATCC BAA-871 / DC3000) protein is Peptide deformylase 2.